The following is a 274-amino-acid chain: Thiamine kinase (274 aa).

This sequence belongs to the thiamine kinase family.

The catalysed reaction is thiamine + ATP = thiamine phosphate + ADP + H(+). It participates in cofactor biosynthesis; thiamine diphosphate biosynthesis; thiamine phosphate from thiamine: step 1/1. Catalyzes the ATP-dependent phosphorylation of thiamine to thiamine phosphate. Is involved in thiamine salvage. This is Thiamine kinase from Escherichia coli O45:K1 (strain S88 / ExPEC).